Reading from the N-terminus, the 90-residue chain is MSRTVFCQRLKKEGPGLDFQLYPGELGKRIFDNISKEAWTEWQKKQVMLINEKKLNMMNLEHRQLLEKEMVNYLFEAGEVAIDGYTPPSK.

It belongs to the Fe(2+)-trafficking protein family.

Its function is as follows. Could be a mediator in iron transactions between iron acquisition and iron-requiring processes, such as synthesis and/or repair of Fe-S clusters in biosynthetic enzymes. The protein is Probable Fe(2+)-trafficking protein of Aeromonas hydrophila subsp. hydrophila (strain ATCC 7966 / DSM 30187 / BCRC 13018 / CCUG 14551 / JCM 1027 / KCTC 2358 / NCIMB 9240 / NCTC 8049).